Reading from the N-terminus, the 419-residue chain is CDP-diacylglycerol--serine O-phosphatidyltransferase 3 (419 aa).

The segment at 1–51 (MPVRRRWYPPSSTAAQPSPDGGDVNTDDADACPSSRQQRPPSLPQHSAPIH) is disordered. Residues 33-47 (PSSRQQRPPSLPQHS) are compositionally biased toward low complexity. The next 7 membrane-spanning stretches (helical) occupy residues 103-123 (PHTV…SGVL), 142-162 (WAMI…TILI), 168-188 (VWRL…FLLF), 260-280 (LLLW…RHML), 287-307 (WWDS…WAGM), 359-379 (FIQV…TFFL), and 384-404 (WIPP…LIAI).

It belongs to the CDP-alcohol phosphatidyltransferase class-I family.

The protein localises to the endoplasmic reticulum membrane. It carries out the reaction a CDP-1,2-diacyl-sn-glycerol + L-serine = a 1,2-diacyl-sn-glycero-3-phospho-L-serine + CMP + H(+). Its pathway is phospholipid metabolism; phosphatidylethanolamine biosynthesis; phosphatidylethanolamine from CDP-diacylglycerol: step 1/2. Its function is as follows. Catalyzes a base-exchange reaction in which the polar head group of phosphatidylethanolamine (PE) or phosphatidylcholine (PC) is replaced by L-serine. In Oryza sativa subsp. japonica (Rice), this protein is CDP-diacylglycerol--serine O-phosphatidyltransferase 3 (PSS3).